We begin with the raw amino-acid sequence, 307 residues long: tRNA dimethylallyltransferase 1 (307 aa).

11–18 (GPTASGKT) is an ATP binding site. 13–18 (TASGKT) is a substrate binding site. Interaction with substrate tRNA stretches follow at residues 36–39 (DSRQ) and 159–163 (QRAIR).

It belongs to the IPP transferase family. In terms of assembly, monomer. It depends on Mg(2+) as a cofactor.

The catalysed reaction is adenosine(37) in tRNA + dimethylallyl diphosphate = N(6)-dimethylallyladenosine(37) in tRNA + diphosphate. In terms of biological role, catalyzes the transfer of a dimethylallyl group onto the adenine at position 37 in tRNAs that read codons beginning with uridine, leading to the formation of N6-(dimethylallyl)adenosine (i(6)A). This Parabacteroides distasonis (strain ATCC 8503 / DSM 20701 / CIP 104284 / JCM 5825 / NCTC 11152) protein is tRNA dimethylallyltransferase 1.